A 1020-amino-acid polypeptide reads, in one-letter code: MGRGAGREYSPAATTAENGGGKKKQKEKELDELKKEVAMDDHKLSLDELGRKYQVDLSKGLTNQRAQDVLARDGPNALTPPPTTPEWVKFCRQLFGGFSILLWIGAILCFLAYGIQAAMEDEPSNDNLYLGVVLAAVVIVTGCFSYYQEAKSSKIMDSFKNMVPQQALVIREGEKMQINAEEVVVGDLVEVKGGDRVPADLRIISSHGCKVDNSSLTGESEPQTRSPEFTHENPLETRNICFFSTNCVEGTARGIVIATGDRTVMGRIATLASGLEVGRTPIAMEIEHFIQLITGVAVFLGVSFFVLSLILGYSWLEAVIFLIGIIVANVPEGLLATVTVCLTLTAKRMARKNCLVKNLEAVETLGSTSTICSDKTGTLTQNRMTVAHMWFDNQIHEADTTEDQSGATFDKRSPTWTALSRIAGLCNRAVFKAGQENISVSKRDTAGDASESALLKCIELSCGSVRKMRDRNPKVAEIPFNSTNKYQLSIHEREDSPQSHVLVMKGAPERILDRCSTILVQGKEIPLDKEMQDAFQNAYMELGGLGERVLGFCQLNLPSGKFPRGFKFDTDELNFPTEKLCFVGLMSMIDPPRAAVPDAVGKCRSAGIKVIMVTGDHPITAKAIAKGVGIISEGNETVEDIAARLNIPMSQVNPREAKACVVHGSDLKDMTSEQLDEILKNHTEIVFARTSPQQKLIIVEGCQRQGAIVAVTGDGVNDSPALKKADIGIAMGISGSDVSKQAADMILLDDNFASIVTGVEEGRLIFDNLKKSIAYTLTSNIPEITPFLLFIIANIPLPLGTVTILCIDLGTDMVPAISLAYEAAESDIMKRQPRNSQTDKLVNERLISMAYGQIGMIQALGGFFTYFVILAENGFLPSRLLGIRLDWDDRTMNDLEDSYGQEWTYEQRKVVEFTCHTAFFASIVVVQWADLIICKTRRNSVFQQGMKNKILIFGLLEETALAAFLSYCPGMGVALRMYPLKVTWWFCAFPYSLLIFIYDEVRKLILRRYPGGWVEKETYY.

Residues 1-5 constitute a propeptide that is removed on maturation; sequence MGRGA. The segment at 1-31 is disordered; that stretch reads MGRGAGREYSPAATTAENGGGKKKQKEKELD. At 6–85 the chain is on the cytoplasmic side; the sequence is GREYSPAATT…NALTPPPTTP (80 aa). A Phosphoserine modification is found at Ser-10. The interaction with phosphoinositide-3 kinase stretch occupies residues 80–82; the sequence is PPP. The chain crosses the membrane as a helical span at residues 86–106; the sequence is EWVKFCRQLFGGFSILLWIGA. Residues 107–129 lie on the Extracellular side of the membrane; that stretch reads ILCFLAYGIQAAMEDEPSNDNLY. Residues 130–150 traverse the membrane as a helical segment; that stretch reads LGVVLAAVVIVTGCFSYYQEA. At 151–286 the chain is on the cytoplasmic side; it reads KSSKIMDSFK…VGRTPIAMEI (136 aa). Positions 212–227 are enriched in polar residues; sequence DNSSLTGESEPQTRSP. The interval 212 to 231 is disordered; that stretch reads DNSSLTGESEPQTRSPEFTH. The chain crosses the membrane as a helical span at residues 287–306; sequence EHFIQLITGVAVFLGVSFFV. Residues 307–318 are Extracellular-facing; the sequence is LSLILGYSWLEA. Residues 319–336 traverse the membrane as a helical segment; it reads VIFLIGIIVANVPEGLLA. The Cytoplasmic portion of the chain corresponds to 337-769; that stretch reads TVTVCLTLTA…EEGRLIFDNL (433 aa). The active-site 4-aspartylphosphate intermediate is the Asp-374. Ser-439, Ser-450, Ser-496, and Ser-559 each carry phosphoserine. Thr-570 is subject to Phosphothreonine. Phosphoserine occurs at positions 587 and 672. Residues Asp-714 and Asp-718 each contribute to the Mg(2+) site. The helical transmembrane segment at 770-789 threads the bilayer; that stretch reads KKSIAYTLTSNIPEITPFLL. The Extracellular portion of the chain corresponds to 790 to 799; the sequence is FIIANIPLPL. A helical membrane pass occupies residues 800–820; the sequence is GTVTILCIDLGTDMVPAISLA. Topologically, residues 821–840 are cytoplasmic; sequence YEAAESDIMKRQPRNSQTDK. Position 826 is a phosphoserine (Ser-826). A helical membrane pass occupies residues 841 to 863; the sequence is LVNERLISMAYGQIGMIQALGGF. Residues 864 to 915 lie on the Extracellular side of the membrane; the sequence is FTYFVILAENGFLPSRLLGIRLDWDDRTMNDLEDSYGQEWTYEQRKVVEFTC. A helical membrane pass occupies residues 916 to 935; it reads HTAFFASIVVVQWADLIICK. At 936–948 the chain is on the cytoplasmic side; that stretch reads TRRNSVFQQGMKN. Ser-940 is subject to Phosphoserine; by PKA. Residues 949 to 967 traverse the membrane as a helical segment; sequence KILIFGLLEETALAAFLSY. The Extracellular segment spans residues 968–982; sequence CPGMGVALRMYPLKV. The helical transmembrane segment at 983–1003 threads the bilayer; the sequence is TWWFCAFPYSLLIFIYDEVRK. Over 1004 to 1020 the chain is Cytoplasmic; it reads LILRRYPGGWVEKETYY.

This sequence belongs to the cation transport ATPase (P-type) (TC 3.A.3) family. Type IIC subfamily. The sodium/potassium-transporting ATPase is composed of a catalytic alpha subunit, an auxiliary non-catalytic beta subunit and an additional regulatory subunit. Interacts with regulatory subunit FXYD1.

It localises to the membrane. It is found in the cell membrane. The enzyme catalyses K(+)(out) + Na(+)(in) + ATP + H2O = K(+)(in) + Na(+)(out) + ADP + phosphate + H(+). Functionally, this is the catalytic component of the active enzyme, which catalyzes the hydrolysis of ATP coupled with the exchange of sodium and potassium ions across the plasma membrane. This action creates the electrochemical gradient of sodium and potassium, providing the energy for active transport of various nutrients. This Homo sapiens (Human) protein is Sodium/potassium-transporting ATPase subunit alpha-2 (ATP1A2).